We begin with the raw amino-acid sequence, 1042 residues long: SWI/SNF-related matrix-associated actin-dependent regulator of chromatin subfamily A member 1 (1042 aa).

The tract at residues 25-82 (EDEQPGPSTSQEEGAAAAATEATAATEKGEKKKEKNVSSFQLKLAAKAPKSEKEMDPE) is disordered. Over residues 36-50 (EEGAAAAATEATAAT) the composition is skewed to low complexity. Composition is skewed to basic and acidic residues over residues 51-60 (EKGEKKKEKN) and 73-82 (PKSEKEMDPE). Residues S116 and S119 each carry the phosphoserine modification. The Helicase ATP-binding domain maps to 195–360 (ISLYENGVNG…WALLNFLLPD (166 aa)). 208-215 (DEMGLGKT) contributes to the ATP binding site. The DEAH box motif lies at 311-314 (DEAH). One can recognise a Helicase C-terminal domain in the interval 490-641 (VLDKLLAKLK…SIVIQQGRLI (152 aa)). Glycyl lysine isopeptide (Lys-Gly) (interchain with G-Cter in SUMO2) cross-links involve residues K650, K716, and K738. Residues 819–849 (EQKKIDGAEPLTPEETEEKEKLLTQGFTNWT) form a disordered region. The segment covering 828 to 837 (PLTPEETEEK) has biased composition (basic and acidic residues). Residues 843 to 895 (QGFTNWTKRDFNQFIKANEKYGRDDIDNIAREVEGKSPEEVMEYSAVFWERCN) form the SANT 1 domain. A Phosphotyrosine modification is found at Y942. The SANT 2 domain occupies 946–1010 (KGKNYTEEED…QRRCNTLISL (65 aa)).

Belongs to the SNF2/RAD54 helicase family. ISWI subfamily. In terms of assembly, may form homodimers. Component of the ACF-1 ISWI chromatin remodeling complex at least composed of SMARCA1 and BAZ1A, which regulates the spacing of histone octamers on the DNA template to facilitate access to DNA. Within the complex interacts with BAZ1A; the interaction is direct. Component of the WICH-1 ISWI chromatin remodeling complex at least composed of SMARCA1 and BAZ1B/WSTF. Within the complex interacts with BAZ1B/WSTF. Component of the NoRC-1 ISWI chromatin remodeling complex at least composed of SMARCA1 and BAZ2A/TIP5. Within the complex interacts with BAZ2A/TIP5. Component of the BRF-1 ISWI chromatin remodeling complex at least composed of SMARCA1 and BAZ2B. Within the complex interacts with BAZ2B. Component of the NURF-1 ISWI chromatin remodeling complex (also called the nucleosome-remodeling factor (NURF) complex) at least composed of SMARCA1, BPTF, RBBP4 and RBBP7. Within the complex interacts with BPTF. Within the complex interacts with RBBP4 and RBBP7. Component of the CERF-1 ISWI chromatin remodeling complex (also called the CECR2-containing-remodeling factor (CERF) complex) at least composed of CECR2 and SMARCA1. LUZP1 is detected as part of the CERF-1 complex in embryonic stem cells where it is involved in complex stabilization but is not detected in the complex in the testis. Component of the RSF-1 ISWI chromatin remodeling complex at least composed of SMARCA1 and RSF1. Within the complex interacts with RSF1. Interacts with PRLR. Interacts with ERCC6. As to quaternary structure, may form homodimers. Component of the BPFT-SMARCA1 complex at least composed of SMARCA1, BPFT, RBBP4 and RBBP7; the complex is catalytically inactive and does not remodel chromatin. Within the complex interacts with BPTF, RBBP4 and RBBP7. Component of the BAZ1A-1-SMARCA1 complex at least composed of SMARCA1 and BAZ1A; the complex is catalytically inactive and does not remodel chromatin. Component of the BAZ1B-1-SMARCA1 complex at least composed of SMARCA1 and BAZ1B; the complex is catalytically inactive and does not remodel chromatin. As to expression, expressed in lung, breast, kidney, ovary, skeletal muscle and brain. In terms of tissue distribution, mainly expressed in non-neuronal tissues such as lung, breast, kidney, and ovary.

Its subcellular location is the nucleus. The protein resides in the chromosome. The catalysed reaction is ATP + H2O = ADP + phosphate + H(+). ATPase that possesses intrinsic ATP-dependent chromatin-remodeling activity. ATPase activity is substrate-dependent, and is increased when nucleosomes are the substrate, but is also catalytically active when DNA alone is the substrate. Catalytic subunit of ISWI chromatin-remodeling complexes, which form ordered nucleosome arrays on chromatin and facilitate access to DNA during DNA-templated processes such as DNA replication, transcription, and repair. Within the ISWI chromatin-remodeling complexes, slides edge- and center-positioned histone octamers away from their original location on the DNA template. Catalytic activity and histone octamer sliding propensity is regulated and determined by components of the ISWI chromatin-remodeling complexes. The BAZ1A-, BAZ1B-, BAZ2A- and BAZ2B-containing ISWI chromatin-remodeling complexes regulate the spacing of nucleosomes along the chromatin and have the ability to slide mononucleosomes to the center of a DNA template. The CECR2- and RSF1-containing ISWI chromatin-remodeling complexes do not have the ability to slide mononucleosomes to the center of a DNA template. Within the NURF-1 and CERF-1 ISWI chromatin remodeling complexes, nucleosomes are the preferred substrate for its ATPase activity. Within the NURF-1 ISWI chromatin-remodeling complex, binds to the promoters of En1 and En2 to positively regulate their expression and promote brain development. May promote neurite outgrowth. May be involved in the development of luteal cells. Facilitates nucleosome assembly during DNA replication, ensuring replication fork progression and genomic stability by preventing replication stress and nascent DNA gaps. Its function is as follows. Catalytically inactive when either DNA or nucleosomes are the substrate and does not possess chromatin-remodeling activity. Acts as a negative regulator of chromatin remodelers by generating inactive complexes. The sequence is that of SWI/SNF-related matrix-associated actin-dependent regulator of chromatin subfamily A member 1 from Homo sapiens (Human).